The following is a 294-amino-acid chain: 33 kDa chaperonin (294 aa).

Intrachain disulfides connect Cys-236–Cys-238 and Cys-269–Cys-272.

The protein belongs to the HSP33 family. Post-translationally, under oxidizing conditions two disulfide bonds are formed involving the reactive cysteines. Under reducing conditions zinc is bound to the reactive cysteines and the protein is inactive.

The protein resides in the cytoplasm. Functionally, redox regulated molecular chaperone. Protects both thermally unfolding and oxidatively damaged proteins from irreversible aggregation. Plays an important role in the bacterial defense system toward oxidative stress. The sequence is that of 33 kDa chaperonin from Desulfotalea psychrophila (strain LSv54 / DSM 12343).